The primary structure comprises 492 residues: Catalase isozyme A (492 aa).

The disordered stretch occupies residues 1–23 (MDPCKFRPSSSFDTKTTTTNAGA). Polar residues predominate over residues 8–21 (PSSSFDTKTTTTNA). Active-site residues include His65 and Asn138. Tyr348 contacts heme.

This sequence belongs to the catalase family. As to quaternary structure, homotetramer. It depends on heme as a cofactor.

It localises to the peroxisome. It is found in the glyoxysome. The enzyme catalyses 2 H2O2 = O2 + 2 H2O. Functionally, occurs in almost all aerobically respiring organisms and serves to protect cells from the toxic effects of hydrogen peroxide. This Oryza sativa subsp. indica (Rice) protein is Catalase isozyme A.